Here is a 130-residue protein sequence, read N- to C-terminus: MRHRKSGRQLNRSSTHLNSMLKNMACSLFTHEVIKTTLSKAKELRRIVEPIITLSKIDTVSRRRLVFSRIRDNAIVAKLFKKLGPCFFSRLGGYTRILKCGFRSGDKAPMAYIELVDRVKNNKKNEILKK.

This sequence belongs to the bacterial ribosomal protein bL17 family. Part of the 50S ribosomal subunit. Contacts protein L32.

The chain is Large ribosomal subunit protein bL17 from Buchnera aphidicola subsp. Acyrthosiphon pisum (strain APS) (Acyrthosiphon pisum symbiotic bacterium).